The chain runs to 464 residues: Protein FAM90A11 (464 aa).

3 disordered regions span residues 1–42 (MMAR…DPRL), 70–389 (PATL…HDGA), and 415–437 (HSPE…SEAP). Composition is skewed to basic and acidic residues over residues 74–89 (GKKE…KPRV) and 97–114 (NKDK…DPQR). The span at 180-197 (LASLSPLRKASLSSSSSL) shows a compositional bias: low complexity. Polar residues predominate over residues 341-356 (GPSTSPQMGRRTSAQV).

Belongs to the FAM90 family.

This is Protein FAM90A11 from Homo sapiens (Human).